The chain runs to 211 residues: Ubiquitin-conjugating enzyme E2 S (211 aa).

The UBC core domain maps to 11-157 (HVIRQVYKEV…ARLMTEIHAH (147 aa)). Cysteine 95 functions as the Glycyl thioester intermediate in the catalytic mechanism. Positions 157-167 (HSSSLRGKDPT) are enriched in basic and acidic residues. Residues 157-211 (HSSSLRGKDPTDPCSSASVTGALGDGPMAKKHAGDRDKKLAAKKKTDKKRALRRL) are disordered. Residues 197 to 211 (AAKKKTDKKRALRRL) show a composition bias toward basic residues.

It belongs to the ubiquitin-conjugating enzyme family.

The enzyme catalyses S-ubiquitinyl-[E1 ubiquitin-activating enzyme]-L-cysteine + [E2 ubiquitin-conjugating enzyme]-L-cysteine = [E1 ubiquitin-activating enzyme]-L-cysteine + S-ubiquitinyl-[E2 ubiquitin-conjugating enzyme]-L-cysteine.. It functions in the pathway protein modification; protein ubiquitination. In terms of biological role, catalyzes the covalent attachment of ubiquitin to other proteins. Acts as an essential factor of the anaphase promoting complex/cyclosome (APC/C), a cell cycle-regulated ubiquitin ligase that controls progression through mitosis. Acts by specifically elongating 'Lys-11'-linked polyubiquitin chains initiated by the E2 enzyme ube2c/ubch10 on APC/C substrates, enhancing the degradation of APC/C substrates by the proteasome and promoting mitotic exit. This Aquarana catesbeiana (American bullfrog) protein is Ubiquitin-conjugating enzyme E2 S (ube2s).